We begin with the raw amino-acid sequence, 282 residues long: uncharacterized protein (282 aa).

A run of 6 helical transmembrane segments spans residues 18 to 38 (PIVLLIPVPGSSVIHDLWAGT), 40 to 60 (LLVVFGISVLLTFYPGWVTIG), 87 to 107 (LWIVLAIGFLTAALAGGTPVV), 119 to 139 (ALHFLRITALSVVLLALGAMV), 164 to 184 (IPVDEWAVALALALRAFPMLI), and 260 to 280 (VTLAITAMASGTAVAIESLIL).

It belongs to the CbiQ family.

It localises to the cell membrane. This is an uncharacterized protein from Mycobacterium tuberculosis (strain CDC 1551 / Oshkosh).